A 159-amino-acid chain; its full sequence is Probable GPI-anchored protein ANS1 (159 aa).

The signal sequence occupies residues 1–20 (MKCTLVSTLFAITNILVAHA). The PIR1/2/3 repeat unit spans residues 101–114 (AAISQISDGQIQAT). A lipid anchor (GPI-anchor amidated glycine) is attached at Gly137. The propeptide at 138–159 (AGMKVESKNMGYIVGVAALLFL) is removed in mature form.

It is found in the cell membrane. In Saccharomyces cerevisiae (strain ATCC 204508 / S288c) (Baker's yeast), this protein is Probable GPI-anchored protein ANS1 (ANS1).